The sequence spans 315 residues: Glutaminase (315 aa).

The substrate site is built by Ser-70, Asn-120, Glu-166, Asn-173, Tyr-197, Tyr-249, and Val-267.

The protein belongs to the glutaminase family. In terms of assembly, homotetramer.

It catalyses the reaction L-glutamine + H2O = L-glutamate + NH4(+). In Rhizobium meliloti (strain 1021) (Ensifer meliloti), this protein is Glutaminase.